The sequence spans 228 residues: tRNA (guanine-N(1)-)-methyltransferase (228 aa).

S-adenosyl-L-methionine contacts are provided by residues Gly-111 and 135–140 (LGDYVL).

Belongs to the RNA methyltransferase TrmD family. As to quaternary structure, homodimer.

Its subcellular location is the cytoplasm. It carries out the reaction guanosine(37) in tRNA + S-adenosyl-L-methionine = N(1)-methylguanosine(37) in tRNA + S-adenosyl-L-homocysteine + H(+). Its function is as follows. Specifically methylates guanosine-37 in various tRNAs. This Clavibacter sepedonicus (Clavibacter michiganensis subsp. sepedonicus) protein is tRNA (guanine-N(1)-)-methyltransferase.